Consider the following 1214-residue polypeptide: Myosin-1 (1214 aa).

The disordered stretch occupies residues 1–21 (MAIIKRGARNKTAQEPAKRSA). One can recognise a Myosin motor domain in the interval 36-715 (VGVSDLTLLS…TLFALEHMRD (680 aa)). ATP is bound at residue 129–136 (GESGAGKT). A Phosphoserine modification is found at Ser-357. Residues 404-486 (SIGILDIYGF…PGIFAAMNDS (83 aa)) form an actin-binding region. IQ domains lie at 719-739 (YNMA…RIDS) and 740-765 (ATRI…EGSK). Residues 771 to 961 (KERRTMSLLG…TILVRRGHPA (191 aa)) enclose the TH1 domain. Disordered regions lie at residues 926–1090 (KPGK…SELP), 1129–1177 (HQGG…AAAQ), and 1193–1214 (NKMR…DDDW). The span at 965–980 (QKKKPKKGKGHSKHHS) shows a compositional bias: basic residues. Composition is skewed to low complexity over residues 981 to 1000 (TSTS…APVS) and 1037 to 1057 (AAQP…QKKV). The span at 1058-1067 (APPPPPPPPM) shows a compositional bias: pro residues. The region spanning 1069-1131 (SSEPKYEAAY…PTNYVVKHQG (63 aa)) is the SH3 domain. Low complexity predominate over residues 1157–1177 (VSSSQSETATTATPASVAAAQ). Over residues 1200–1214 (DGEDNGNDDDDDDDW) the composition is skewed to acidic residues.

This sequence belongs to the TRAFAC class myosin-kinesin ATPase superfamily. Myosin family. Phosphorylation of the TEDS site (Ser-357) is required for the polarization of the actin cytoskeleton. Phosphorylation probably activates the myosin-I ATPase activity.

The protein resides in the cytoplasm. It localises to the cytoskeleton. The protein localises to the actin patch. In terms of biological role, type-I myosin implicated in the organization of the actin cytoskeleton. Required for proper actin cytoskeleton polarization. At the cell cortex, assembles in patch-like structures together with proteins from the actin-polymerizing machinery and promotes actin assembly. Functions as actin nucleation-promoting factor (NPF) for the Arp2/3 complex. The sequence is that of Myosin-1 (MYO1) from Vanderwaltozyma polyspora (strain ATCC 22028 / DSM 70294 / BCRC 21397 / CBS 2163 / NBRC 10782 / NRRL Y-8283 / UCD 57-17) (Kluyveromyces polysporus).